The primary structure comprises 196 residues: Adenylate kinase (196 aa).

9–17 (GIPGVGKST) contacts ATP.

Belongs to the archaeal adenylate kinase family.

The protein localises to the cytoplasm. It carries out the reaction AMP + ATP = 2 ADP. In Pyrococcus abyssi (strain GE5 / Orsay), this protein is Adenylate kinase (adkA).